Here is a 230-residue protein sequence, read N- to C-terminus: Orotidine 5'-phosphate decarboxylase (230 aa).

Residues Asp11, Lys34, 61 to 70 (DLKLHDIPNT), Thr117, Arg179, Gln188, Gly208, and Arg209 each bind substrate. The active-site Proton donor is Lys63.

The protein belongs to the OMP decarboxylase family. Type 1 subfamily. Homodimer.

It carries out the reaction orotidine 5'-phosphate + H(+) = UMP + CO2. Its pathway is pyrimidine metabolism; UMP biosynthesis via de novo pathway; UMP from orotate: step 2/2. Functionally, catalyzes the decarboxylation of orotidine 5'-monophosphate (OMP) to uridine 5'-monophosphate (UMP). The chain is Orotidine 5'-phosphate decarboxylase from Streptococcus equi subsp. zooepidemicus (strain H70).